Consider the following 468-residue polypeptide: Proline--tRNA ligase (468 aa).

It belongs to the class-II aminoacyl-tRNA synthetase family. ProS type 3 subfamily. Homodimer.

The protein resides in the cytoplasm. It carries out the reaction tRNA(Pro) + L-proline + ATP = L-prolyl-tRNA(Pro) + AMP + diphosphate. In terms of biological role, catalyzes the attachment of proline to tRNA(Pro) in a two-step reaction: proline is first activated by ATP to form Pro-AMP and then transferred to the acceptor end of tRNA(Pro). This is Proline--tRNA ligase from Frankia alni (strain DSM 45986 / CECT 9034 / ACN14a).